We begin with the raw amino-acid sequence, 89 residues long: Small ribosomal subunit protein uS19 (89 aa).

It belongs to the universal ribosomal protein uS19 family.

Functionally, protein S19 forms a complex with S13 that binds strongly to the 16S ribosomal RNA. In Bacteroides fragilis (strain YCH46), this protein is Small ribosomal subunit protein uS19.